The following is a 142-amino-acid chain: Domesticated amidase effector 2 (142 aa).

Positions 1 to 35 (MKLFLISAALVVLGLAAVADAIGCSDPSPFQGRWV) are cleaved as a signal peptide. Residues cysteine 43 and histidine 94 contribute to the active site.

The protein belongs to the cell wall amidase Dae2/Tae2-like family. In terms of processing, may be post-translationally modified, since the saliva wild-type protein is slightly heavier than the recombinant one. In terms of tissue distribution, detected in salivary glands and in the gut (at protein level).

The protein resides in the secreted. Its function is as follows. Tick gut and saliva antibacterial peptide that directly antagonizes host skin commensals which enter the ticks during feeding. Acts as a cell wall hydrolase that cleaves the bond between gamma-D-glutamate-meso-diaminopimelate of a peptide stem and D-alanine of another peptide stem in peptidoglycans. In vitro, degrades peptidoglycans from both Gram-negative and Gram-positive bacteria. Is not able to traverse the protective outer membrane of Gram-negative bacteria. Is not able to kill Borrelia burgdorferi, one of the Lyme disease-causing bacteria. This Ixodes scapularis (Black-legged tick) protein is Domesticated amidase effector 2.